The primary structure comprises 339 residues: Heat stress transcription factor C-1a (339 aa).

Positions 154–217 (EEEDAAEDVL…LAKLADDPNA (64 aa)) form a coiled coil. A hydrophobic repeat HR-A/B region spans residues 176–212 (LRHEQTAIGEELARMSQRLQATERRPDQLMSFLAKLA). The interval 227 to 248 (AERKRRRQHLPSHEPTVCPLPP) is disordered. The short motif at 229–233 (RKRRR) is the Nuclear localization signal element.

This sequence belongs to the HSF family. Class C subfamily. Homotrimer. Exhibits temperature-dependent phosphorylation.

Its subcellular location is the nucleus. In terms of biological role, transcriptional regulator that specifically binds DNA of heat shock promoter elements (HSE). The sequence is that of Heat stress transcription factor C-1a (HSFC1A) from Oryza sativa subsp. japonica (Rice).